We begin with the raw amino-acid sequence, 330 residues long: Methionyl-tRNA formyltransferase (330 aa).

121–124 (SLLP) is a binding site for (6S)-5,6,7,8-tetrahydrofolate.

This sequence belongs to the Fmt family.

The enzyme catalyses L-methionyl-tRNA(fMet) + (6R)-10-formyltetrahydrofolate = N-formyl-L-methionyl-tRNA(fMet) + (6S)-5,6,7,8-tetrahydrofolate + H(+). Functionally, attaches a formyl group to the free amino group of methionyl-tRNA(fMet). The formyl group appears to play a dual role in the initiator identity of N-formylmethionyl-tRNA by promoting its recognition by IF2 and preventing the misappropriation of this tRNA by the elongation apparatus. The polypeptide is Methionyl-tRNA formyltransferase (Burkholderia cenocepacia (strain ATCC BAA-245 / DSM 16553 / LMG 16656 / NCTC 13227 / J2315 / CF5610) (Burkholderia cepacia (strain J2315))).